A 383-amino-acid chain; its full sequence is Lipid-A-disaccharide synthase (383 aa).

It belongs to the LpxB family.

It catalyses the reaction 2-N,3-O-bis[(3R)-3-hydroxytetradecanoyl]-alpha-D-glucosaminyl 1-phosphate + UDP-2-N,3-O-bis[(3R)-3-hydroxytetradecanoyl]-alpha-D-glucosamine = lipid A disaccharide (E. coli) + UDP + H(+). It carries out the reaction a lipid X + a UDP-2-N,3-O-bis[(3R)-3-hydroxyacyl]-alpha-D-glucosamine = a lipid A disaccharide + UDP + H(+). The protein operates within glycolipid biosynthesis; lipid IV(A) biosynthesis; lipid IV(A) from (3R)-3-hydroxytetradecanoyl-[acyl-carrier-protein] and UDP-N-acetyl-alpha-D-glucosamine: step 5/6. Condensation of UDP-2,3-diacylglucosamine and 2,3-diacylglucosamine-1-phosphate to form lipid A disaccharide, a precursor of lipid A, a phosphorylated glycolipid that anchors the lipopolysaccharide to the outer membrane of the cell. This chain is Lipid-A-disaccharide synthase, found in Pectobacterium atrosepticum (strain SCRI 1043 / ATCC BAA-672) (Erwinia carotovora subsp. atroseptica).